The primary structure comprises 874 residues: Alanine--tRNA ligase (874 aa).

The Zn(2+) site is built by His565, His569, Cys666, and His670.

Belongs to the class-II aminoacyl-tRNA synthetase family. Zn(2+) serves as cofactor.

The protein resides in the cytoplasm. It carries out the reaction tRNA(Ala) + L-alanine + ATP = L-alanyl-tRNA(Ala) + AMP + diphosphate. Its function is as follows. Catalyzes the attachment of alanine to tRNA(Ala) in a two-step reaction: alanine is first activated by ATP to form Ala-AMP and then transferred to the acceptor end of tRNA(Ala). Also edits incorrectly charged Ser-tRNA(Ala) and Gly-tRNA(Ala) via its editing domain. The protein is Alanine--tRNA ligase of Polynucleobacter asymbioticus (strain DSM 18221 / CIP 109841 / QLW-P1DMWA-1) (Polynucleobacter necessarius subsp. asymbioticus).